Here is a 245-residue protein sequence, read N- to C-terminus: Phycocyanobilin:ferredoxin oxidoreductase (245 aa).

This sequence belongs to the HY2 family.

The catalysed reaction is (2R,3Z)-phycocyanobilin + 4 oxidized [2Fe-2S]-[ferredoxin] = biliverdin IXalpha + 4 reduced [2Fe-2S]-[ferredoxin] + 4 H(+). Functionally, catalyzes the four-electron reduction of biliverdin IX-alpha (2-electron reduction at both the A and D rings); the reaction proceeds via an isolatable 2-electron intermediate, 181,182-dihydrobiliverdin. In Nostoc punctiforme (strain ATCC 29133 / PCC 73102), this protein is Phycocyanobilin:ferredoxin oxidoreductase (pcyA).